Here is a 288-residue protein sequence, read N- to C-terminus: Killer cell lectin-like receptor 2 (288 aa).

At 1–45 (MSEQEVTYTTLRFHKSSGLQNPVRPEETQRPRDVGHRECSVPWKF) the chain is on the cytoplasmic side. The helical; Signal-anchor for type II membrane protein transmembrane segment at 46-66 (IVIVLGILCFLLLLTVAVLVI) threads the bilayer. Topologically, residues 67-288 (HIFRDGQEKH…SALQRDEDES (222 aa)) are extracellular. 3 N-linked (GlcNAc...) asparagine glycosylation sites follow: asparagine 94, asparagine 105, and asparagine 114. The C-type lectin domain maps to 144–263 (QVEGYWFCCG…THGCICEKRL (120 aa)). Intrachain disulfides connect cysteine 151/cysteine 156, cysteine 169/cysteine 257, cysteine 173/cysteine 259, and cysteine 238/cysteine 251. Asparagine 177 is a glycosylation site (N-linked (GlcNAc...) asparagine).

As to quaternary structure, homodimer; disulfide-linked.

Its subcellular location is the membrane. Receptor on natural killer (NK) cells for class I MHC. The chain is Killer cell lectin-like receptor 2 (Klra2) from Mus musculus (Mouse).